The following is a 91-amino-acid chain: Small ribosomal subunit protein uS19 (91 aa).

It belongs to the universal ribosomal protein uS19 family.

Functionally, protein S19 forms a complex with S13 that binds strongly to the 16S ribosomal RNA. This is Small ribosomal subunit protein uS19 from Prochlorococcus marinus (strain MIT 9211).